A 153-amino-acid chain; its full sequence is Arginine repressor (153 aa).

This sequence belongs to the ArgR family.

Its subcellular location is the cytoplasm. Its pathway is amino-acid biosynthesis; L-arginine biosynthesis [regulation]. In terms of biological role, regulates arginine biosynthesis genes. The protein is Arginine repressor of Clostridium tetani (strain Massachusetts / E88).